Consider the following 573-residue polypeptide: Diflavin flavoprotein A 1 (573 aa).

The interval 43 to 236 (QNGTTYNSYL…GTISTVANGH (194 aa)) is zinc metallo-hydrolase. 6 residues coordinate Fe cation: histidine 92, glutamate 94, aspartate 96, histidine 159, aspartate 178, and histidine 236. The 137-residue stretch at 265-401 (VVVFYVADYG…LCDESGTDLG (137 aa)) folds into the Flavodoxin-like domain. The flavodoxin-reductase-like stretch occupies residues 424 to 573 (IGRISGGLYI…VHHRKVGNYY (150 aa)).

In the N-terminal section; belongs to the zinc metallo-hydrolase group 3 family. The protein in the C-terminal section; belongs to the flavodoxin reductase family. As to quaternary structure, homodimer. Fe cation serves as cofactor. The cofactor is FAD. It depends on FMN as a cofactor.

In terms of biological role, mediates electron transfer from NADH to oxygen, reducing it to water. This modular protein has 3 redox cofactors, in other organisms the same activity requires 2 or 3 proteins. The sequence is that of Diflavin flavoprotein A 1 (dfa1) from Synechocystis sp. (strain ATCC 27184 / PCC 6803 / Kazusa).